The primary structure comprises 251 residues: uncharacterized protein (251 aa).

36 to 43 (GKQGTGKT) is a binding site for ATP. A disordered region spans residues 230 to 251 (SDNKTENPSNPSLLTKIDDVTR).

In terms of biological role, this protein may be involved in virus assembly. Essential for virus function. This is an uncharacterized protein from Sulfolobus spindle-shape virus 1 (SSV1).